Reading from the N-terminus, the 83-residue chain is Cytochrome b559 subunit alpha (83 aa).

The helical transmembrane segment at 21–35 (VIHSITIPSLFIAGW) threads the bilayer. Position 23 (His23) interacts with heme.

The protein belongs to the PsbE/PsbF family. Heterodimer of an alpha subunit and a beta subunit. PSII is composed of 1 copy each of membrane proteins PsbA, PsbB, PsbC, PsbD, PsbE, PsbF, PsbH, PsbI, PsbJ, PsbK, PsbL, PsbM, PsbT, PsbX, PsbY, PsbZ, Psb30/Ycf12, at least 3 peripheral proteins of the oxygen-evolving complex and a large number of cofactors. It forms dimeric complexes. Heme b is required as a cofactor.

Its subcellular location is the plastid. The protein resides in the chloroplast thylakoid membrane. Its function is as follows. This b-type cytochrome is tightly associated with the reaction center of photosystem II (PSII). PSII is a light-driven water:plastoquinone oxidoreductase that uses light energy to abstract electrons from H(2)O, generating O(2) and a proton gradient subsequently used for ATP formation. It consists of a core antenna complex that captures photons, and an electron transfer chain that converts photonic excitation into a charge separation. This Marchantia polymorpha (Common liverwort) protein is Cytochrome b559 subunit alpha.